Reading from the N-terminus, the 289-residue chain is S-methyl-5'-thioadenosine phosphorylase (289 aa).

Residues Ser11, 53–54 (RH), and 86–87 (SA) each bind phosphate. Met187 serves as a coordination point for substrate. Thr188 is a binding site for phosphate. 211–213 (DYD) is a binding site for substrate.

It belongs to the PNP/MTAP phosphorylase family. MTAP subfamily. As to quaternary structure, homohexamer. Dimer of a homotrimer.

It catalyses the reaction S-methyl-5'-thioadenosine + phosphate = 5-(methylsulfanyl)-alpha-D-ribose 1-phosphate + adenine. Its pathway is amino-acid biosynthesis; L-methionine biosynthesis via salvage pathway; S-methyl-5-thio-alpha-D-ribose 1-phosphate from S-methyl-5'-thioadenosine (phosphorylase route): step 1/1. Catalyzes the reversible phosphorylation of S-methyl-5'-thioadenosine (MTA) to adenine and 5-methylthioribose-1-phosphate. Involved in the breakdown of MTA, a major by-product of polyamine biosynthesis. Responsible for the first step in the methionine salvage pathway after MTA has been generated from S-adenosylmethionine. Has broad substrate specificity with 6-aminopurine nucleosides as preferred substrates. This Thermosynechococcus vestitus (strain NIES-2133 / IAM M-273 / BP-1) protein is S-methyl-5'-thioadenosine phosphorylase.